Reading from the N-terminus, the 308-residue chain is B3 domain-containing protein REM23 (308 aa).

The TF-B3 1 DNA-binding region spans 19–114 (FFKVLKRSDM…SFTVKIFNKD (96 aa)). The tract at residues 117–198 (EMMQPPQSRA…TERTQNSKRT (82 aa)) is disordered. Positions 121–133 (PPQSRASFASSSR) are enriched in polar residues. Positions 134–145 (VKTEQDVKREEE) are enriched in basic and acidic residues. Residues 149–166 (SSDSRSRGPTTAAETNRG) show a composition bias toward polar residues. Positions 168–177 (SYKRKLNFGK) are enriched in basic residues. A compositionally biased stretch (basic and acidic residues) spans 178–198 (KKAEETQTYKRTERTQNSKRT). Residues 216–308 (VAGFKIFISK…LELLLVVSKP (93 aa)) constitute a DNA-binding region (TF-B3 2).

The protein localises to the nucleus. The sequence is that of B3 domain-containing protein REM23 (REM23) from Arabidopsis thaliana (Mouse-ear cress).